The following is a 249-amino-acid chain: Probable transcriptional regulatory protein MXAN_4974 (249 aa).

This sequence belongs to the TACO1 family.

The protein localises to the cytoplasm. The sequence is that of Probable transcriptional regulatory protein MXAN_4974 from Myxococcus xanthus (strain DK1622).